A 423-amino-acid chain; its full sequence is Lysosomal acid phosphatase (423 aa).

The signal sequence occupies residues 1–30 (MAGRRFGWSRAALLQLILGVNLMVMPRTQA). Over 31–380 (RTLRFVTLLY…QLAGGPADTE (350 aa)) the chain is Lumenal. His-42 functions as the Nucleophile in the catalytic mechanism. Asn-92, Asn-133, Asn-167, Asn-177, Asn-191, and Asn-267 each carry an N-linked (GlcNAc...) asparagine glycan. Intrachain disulfides connect Cys-159–Cys-370, Cys-212–Cys-310, and Cys-345–Cys-349. The Proton donor role is filled by Asp-287. Asn-322 and Asn-331 each carry an N-linked (GlcNAc...) asparagine glycan. Residues 381 to 401 (VIVALAVCGSILFLLIVLLLT) traverse the membrane as a helical segment. Topologically, residues 402–423 (VLFRVQAQPPGYRHVPDGEDHA) are cytoplasmic.

Belongs to the histidine acid phosphatase family. Post-translationally, the membrane-bound form is converted to the soluble form by sequential proteolytic processing. First, the C-terminal cytoplasmic tail is removed. Cleavage by a lysosomal protease releases the soluble form in the lysosome lumen.

Its subcellular location is the lysosome membrane. The protein localises to the lysosome lumen. The enzyme catalyses a phosphate monoester + H2O = an alcohol + phosphate. This is Lysosomal acid phosphatase (ACP2) from Bos taurus (Bovine).